The chain runs to 378 residues: MADYYDLLGVSKDADGDTLKRAYRRLARQYHPDINKDPGAEDRFKEIGRAYEVLSDPQTRGRYDQFGEAGLGGAAGMPDVGDMGGFADLFETFFSGFGGAGGSGGARPRRRGPQQGDDLRYDLKIDFEQAVFGQEREIKIPHLETCDTCNGTGAKVGSGPTTCSTCGGVGQVRRATRTPFGSFTQVAECPSCEGTGQVIADPCPACAGQGVRQVRKKLRINIPAGVDTGTRLRVAGEGNAGLRGGPSGDLYVFLTVKSHPQLRRDGITVLSEVNVSYLQAILGDIIEVDTVDGNTSLEIPAGTQPNAVLTLENKGIPKLGNPVARGNQRISINVKLPIRLSDEERGLLEELAGHHSAKGRQHHHHNSGLFARLFGQKG.

One can recognise a J domain in the interval 3–67; that stretch reads DYYDLLGVSK…QTRGRYDQFG (65 aa). A CR-type zinc finger spans residues 133-215; that stretch reads GQEREIKIPH…CAGQGVRQVR (83 aa). Zn(2+) is bound by residues Cys146, Cys149, Cys163, Cys166, Cys189, Cys192, Cys203, and Cys206. 4 CXXCXGXG motif repeats span residues 146 to 153, 163 to 170, 189 to 196, and 203 to 210; these read CDTCNGTG, CSTCGGVG, CPSCEGTG, and CPACAGQG.

Belongs to the DnaJ family. Homodimer. It depends on Zn(2+) as a cofactor.

The protein localises to the cytoplasm. Functionally, participates actively in the response to hyperosmotic and heat shock by preventing the aggregation of stress-denatured proteins and by disaggregating proteins, also in an autonomous, DnaK-independent fashion. Unfolded proteins bind initially to DnaJ; upon interaction with the DnaJ-bound protein, DnaK hydrolyzes its bound ATP, resulting in the formation of a stable complex. GrpE releases ADP from DnaK; ATP binding to DnaK triggers the release of the substrate protein, thus completing the reaction cycle. Several rounds of ATP-dependent interactions between DnaJ, DnaK and GrpE are required for fully efficient folding. Also involved, together with DnaK and GrpE, in the DNA replication of plasmids through activation of initiation proteins. The protein is Chaperone protein DnaJ of Prochlorococcus marinus (strain MIT 9313).